Reading from the N-terminus, the 103-residue chain is Large ribosomal subunit protein uL23 (103 aa).

The protein belongs to the universal ribosomal protein uL23 family. As to quaternary structure, part of the 50S ribosomal subunit. Contacts protein L29, and trigger factor when it is bound to the ribosome.

Its function is as follows. One of the early assembly proteins it binds 23S rRNA. One of the proteins that surrounds the polypeptide exit tunnel on the outside of the ribosome. Forms the main docking site for trigger factor binding to the ribosome. This is Large ribosomal subunit protein uL23 from Chlorobium phaeovibrioides (strain DSM 265 / 1930) (Prosthecochloris vibrioformis (strain DSM 265)).